Consider the following 105-residue polypeptide: Small ribosomal subunit protein uS10 (105 aa).

This sequence belongs to the universal ribosomal protein uS10 family. As to quaternary structure, part of the 30S ribosomal subunit.

Involved in the binding of tRNA to the ribosomes. This is Small ribosomal subunit protein uS10 from Trichodesmium erythraeum (strain IMS101).